The chain runs to 726 residues: Endo-1,4-beta-xylanase/feruloyl esterase (726 aa).

The first 19 residues, 1-19 (MKKLLVALSLIAGSLTASA), serve as a signal peptide directing secretion. The GH10 domain occupies 27–369 (YAAGPGLKDA…KRSLQIIRDF (343 aa)). Catalysis depends on glutamate 161, which acts as the Proton donor; for xylanase activity. The active-site Nucleophile; for xylanase activity is the glutamate 280. The tract at residues 370-726 (DAAMDNRKPK…LEKMAQSLFK (357 aa)) is feruloyl esterase. Serine 629 functions as the Nucleophile; for esterase activity in the catalytic mechanism.

The protein in the N-terminal section; belongs to the glycosyl hydrolase 10 (cellulase F) family. As to quaternary structure, monomer or homodimer.

It catalyses the reaction Endohydrolysis of (1-&gt;4)-beta-D-xylosidic linkages in xylans.. It carries out the reaction feruloyl-polysaccharide + H2O = ferulate + polysaccharide.. It participates in glycan degradation; xylan degradation. Involved in degradation of plant cell wall polysaccharides. Has endo-xylanase activity towards substrates such as oat spelt xylan (OSX), acetylated xylo-oligosaccharides and acetylated xylan, producing primarily xylobiose; cannot hydrolyze xylobiose to xylose. Also has feruloyl esterase activity, releasing ferulic acid from methylferulate, and from the more natural substrates wheat bran, corn fiber, and XOS(FA,Ac), a corn fiber-derived substrate enriched in O-acetyl and ferulic acid esters. Exhibits negligible acetyl esterase activity on sugar acetates. Acts synergistically with Xyl3A to increase the release of xylose from xylan. Does not possess endoglucanase or mannanase activities since it is not able to hydrolyze carboxymethyl cellulose and locust bean gum. The sequence is that of Endo-1,4-beta-xylanase/feruloyl esterase from Xylanibacter ruminicola (strain ATCC 19189 / DSM 19721 / CIP 105475 / JCM 8958 / 23) (Prevotella ruminicola).